The chain runs to 101 residues: NAD(P)H-quinone oxidoreductase subunit 4L, chloroplastic (101 aa).

The next 3 helical transmembrane spans lie at 2–22 (MLEYVLFLSAYLFSIGIYGLI), 32–52 (MCLELILNAVNINLVTFSDLF), and 61–81 (IFSIFVIAIAAAEAAIGPAIV).

The protein belongs to the complex I subunit 4L family. NDH is composed of at least 16 different subunits, 5 of which are encoded in the nucleus.

It is found in the plastid. It localises to the chloroplast thylakoid membrane. The enzyme catalyses a plastoquinone + NADH + (n+1) H(+)(in) = a plastoquinol + NAD(+) + n H(+)(out). It catalyses the reaction a plastoquinone + NADPH + (n+1) H(+)(in) = a plastoquinol + NADP(+) + n H(+)(out). NDH shuttles electrons from NAD(P)H:plastoquinone, via FMN and iron-sulfur (Fe-S) centers, to quinones in the photosynthetic chain and possibly in a chloroplast respiratory chain. The immediate electron acceptor for the enzyme in this species is believed to be plastoquinone. Couples the redox reaction to proton translocation, and thus conserves the redox energy in a proton gradient. In Acorus calamus var. americanus (American sweet flag), this protein is NAD(P)H-quinone oxidoreductase subunit 4L, chloroplastic.